The primary structure comprises 390 residues: NADH-dependent butanol dehydrogenase B (390 aa).

Belongs to the iron-containing alcohol dehydrogenase family. In terms of assembly, homodimer.

It functions in the pathway alcohol metabolism; butanol biosynthesis. The sequence is that of NADH-dependent butanol dehydrogenase B (bdhB) from Clostridium acetobutylicum (strain ATCC 824 / DSM 792 / JCM 1419 / IAM 19013 / LMG 5710 / NBRC 13948 / NRRL B-527 / VKM B-1787 / 2291 / W).